A 93-amino-acid chain; its full sequence is Sec-independent protein translocase protein TatA (93 aa).

A helical transmembrane segment spans residues 1 to 21; that stretch reads MGSLSPWHWAILAVVVILLFG. Residues 45 to 93 form a disordered region; sequence EMQSENKTETSALGAQSESSAANPTPVQSQRVDPPAPSEQGHSEARPAS. A compositionally biased stretch (polar residues) spans 53–75; the sequence is ETSALGAQSESSAANPTPVQSQR.

It belongs to the TatA/E family. As to quaternary structure, the Tat system comprises two distinct complexes: a TatABC complex, containing multiple copies of TatA, TatB and TatC subunits, and a separate TatA complex, containing only TatA subunits. Substrates initially bind to the TatABC complex, which probably triggers association of the separate TatA complex to form the active translocon.

The protein localises to the cell membrane. Functionally, part of the twin-arginine translocation (Tat) system that transports large folded proteins containing a characteristic twin-arginine motif in their signal peptide across membranes. TatA could form the protein-conducting channel of the Tat system. The polypeptide is Sec-independent protein translocase protein TatA (Mycolicibacterium paratuberculosis (strain ATCC BAA-968 / K-10) (Mycobacterium paratuberculosis)).